We begin with the raw amino-acid sequence, 455 residues long: Exodeoxyribonuclease 7 large subunit (455 aa).

It belongs to the XseA family. Heterooligomer composed of large and small subunits.

It localises to the cytoplasm. It catalyses the reaction Exonucleolytic cleavage in either 5'- to 3'- or 3'- to 5'-direction to yield nucleoside 5'-phosphates.. Its function is as follows. Bidirectionally degrades single-stranded DNA into large acid-insoluble oligonucleotides, which are then degraded further into small acid-soluble oligonucleotides. This Koribacter versatilis (strain Ellin345) protein is Exodeoxyribonuclease 7 large subunit.